Consider the following 292-residue polypeptide: Ribosomal protein L11 methyltransferase (292 aa).

S-adenosyl-L-methionine is bound by residues Thr-136, Gly-159, Asp-181, and Asn-228.

It belongs to the methyltransferase superfamily. PrmA family.

It is found in the cytoplasm. It carries out the reaction L-lysyl-[protein] + 3 S-adenosyl-L-methionine = N(6),N(6),N(6)-trimethyl-L-lysyl-[protein] + 3 S-adenosyl-L-homocysteine + 3 H(+). Its function is as follows. Methylates ribosomal protein L11. This Rhizobium rhizogenes (strain K84 / ATCC BAA-868) (Agrobacterium radiobacter) protein is Ribosomal protein L11 methyltransferase.